We begin with the raw amino-acid sequence, 147 residues long: Sentan (147 aa).

Positions 1–36 are disordered; it reads MGGCMHSTWDHALHSRGEPRPSEAPASISAPSKMPK. Residues 8-21 show a composition bias toward basic and acidic residues; sequence TWDHALHSRGEPRP. The segment covering 23–32 has biased composition (low complexity); sequence EAPASISAPS.

Belongs to the S-100 family. Expressed exclusively in ciliated epithelial cells. Detected in ciliated epithelium of trachea and oviduct (at protein level).

It localises to the cell projection. Its subcellular location is the cilium. Its function is as follows. May be a component of the linker structure that bridges the ciliary membrane and peripheral singlet microtubules. The protein is Sentan (Sntn) of Mus musculus (Mouse).